Consider the following 1265-residue polypeptide: 1-phosphatidylinositol 4,5-bisphosphate phosphodiesterase gamma-2 (1265 aa).

Positions 20–131 (RALELGTVMT…WLSGLKILHQ (112 aa)) constitute a PH domain. In terms of domain architecture, PI-PLC X-box spans 312–456 (QDMNNPLSHY…LREKIIIKHK (145 aa)). Active-site residues include H327 and H372. 2 consecutive SH2 domains span residues 532-635 (WFHK…TDPV) and 646-735 (WYYD…RYPV). Phosphotyrosine; by BTK occurs at positions 753 and 759. Residues 769–829 (MPQRTVKALY…PSNYVEDISA (61 aa)) form the SH3 domain. The region spanning 930–1044 (LSDLVVYCKP…GYVLQPESMR (115 aa)) is the PI-PLC Y-box domain. Positions 1038 to 1169 (LQPESMRSEK…SGFRSVPLKN (132 aa)) constitute a C2 domain. Phosphotyrosine; by BTK is present on Y1197. 2 positions are modified to phosphotyrosine: Y1217 and Y1245.

In terms of assembly, part of a complex composed of EEIG1, TNFRSF11A/RANK, PLCG2, GAB2, TEC and BTK; complex formation increases in the presence of TNFSF11/RANKL. Interacts (via SH2 domain) with CSF1R (tyrosine phosphorylated). Interacts constitutively with THEMIS2. It depends on Ca(2+) as a cofactor. In terms of processing, phosphorylated on tyrosine residues by CSF1R. Phosphorylated on tyrosine residues by BTK and SYK; upon ligand-induced activation of a variety of growth factor receptors and immune system receptors. Phosphorylation leads to increased phospholipase activity.

Its subcellular location is the membrane raft. The catalysed reaction is a 1,2-diacyl-sn-glycero-3-phospho-(1D-myo-inositol-4,5-bisphosphate) + H2O = 1D-myo-inositol 1,4,5-trisphosphate + a 1,2-diacyl-sn-glycerol + H(+). The production of the second messenger molecules diacylglycerol (DAG) and inositol 1,4,5-trisphosphate (IP3) is mediated by activated phosphatidylinositol-specific phospholipase C enzymes. It is a crucial enzyme in transmembrane signaling. This chain is 1-phosphatidylinositol 4,5-bisphosphate phosphodiesterase gamma-2, found in Rattus norvegicus (Rat).